The primary structure comprises 121 residues: Large ribosomal subunit protein uL22 (121 aa).

This sequence belongs to the universal ribosomal protein uL22 family. Part of the 50S ribosomal subunit.

Functionally, this protein binds specifically to 23S rRNA; its binding is stimulated by other ribosomal proteins, e.g. L4, L17, and L20. It is important during the early stages of 50S assembly. It makes multiple contacts with different domains of the 23S rRNA in the assembled 50S subunit and ribosome. Its function is as follows. The globular domain of the protein is located near the polypeptide exit tunnel on the outside of the subunit, while an extended beta-hairpin is found that lines the wall of the exit tunnel in the center of the 70S ribosome. The sequence is that of Large ribosomal subunit protein uL22 from Synechocystis sp. (strain ATCC 27184 / PCC 6803 / Kazusa).